The sequence spans 203 residues: CASP-like protein 2U2 (203 aa).

The disordered stretch occupies residues 1-21; it reads MGGFVDDGAAGLAPSHGSSRA. Residues 1–27 are Cytoplasmic-facing; the sequence is MGGFVDDGAAGLAPSHGSSRAGRGLEG. Residues 28–48 traverse the membrane as a helical segment; it reads AGVFLRFVASLLSIAGLMLLV. At 49 to 73 the chain is on the extracellular side; that stretch reads KDNQTVQQMVATEAVTLETKYSDIS. The N-linked (GlcNAc...) asparagine glycan is linked to Asn51. The chain crosses the membrane as a helical span at residues 74–94; that stretch reads AFVFLLYTNGLVAVYCFFLAL. Residues 95-108 are Cytoplasmic-facing; sequence ASVFSLIASARSGK. The chain crosses the membrane as a helical span at residues 109–129; the sequence is LAGWVTFVLDQGLAYVLLAAA. Residues 130–163 are Extracellular-facing; it reads AASTEVLYLAENGDLKTSWAEICSQFGHFCHMAR. Residues 164–184 form a helical membrane-spanning segment; sequence ASIVVSFLSMLAMAVLSVMSA. Residues 185–203 are Cytoplasmic-facing; sequence QQLFSKYRRPMTAKTAQDI.

Belongs to the Casparian strip membrane proteins (CASP) family. Homodimer and heterodimers.

It is found in the cell membrane. This chain is CASP-like protein 2U2, found in Osmunda lancea (Fern).